Reading from the N-terminus, the 142-residue chain is Large ribosomal subunit protein uL11 (142 aa).

Belongs to the universal ribosomal protein uL11 family. Part of the ribosomal stalk of the 50S ribosomal subunit. Interacts with L10 and the large rRNA to form the base of the stalk. L10 forms an elongated spine to which L12 dimers bind in a sequential fashion forming a multimeric L10(L12)X complex. One or more lysine residues are methylated.

Forms part of the ribosomal stalk which helps the ribosome interact with GTP-bound translation factors. This chain is Large ribosomal subunit protein uL11, found in Yersinia pseudotuberculosis serotype O:1b (strain IP 31758).